We begin with the raw amino-acid sequence, 358 residues long: Bis(monoacylglycero)phosphate synthase CLN5 (358 aa).

Residues 1–23 (MAQEVDTAQGAEMRRGAGAARGR) lie on the Cytoplasmic side of the membrane. Residues 24 to 40 (ASWCWALALLWLAVVPG) traverse the membrane as a helical; Signal-anchor for type II membrane protein segment. Residues 41 to 358 (WSRVSGIPSR…PIRNKTLSGL (318 aa)) lie on the Lumenal side of the membrane. Intrachain disulfides connect C70-C159 and C77-C165. H117 (proton acceptor) is an active-site residue. Residues N130, N143, N178, and N203 are each glycosylated (N-linked (GlcNAc...) asparagine). C231 acts as the Nucleophile; Acyl-thioester intermediate in catalysis. N-linked (GlcNAc...) asparagine glycans are attached at residues N255, N271, and N281. The tract at residues 304–343 (FLLSLLQIFDAVIVHKQFYLFYNFEYWFLPMKFPFIKITY) is membrane-anchoring. The N-linked (GlcNAc...) asparagine glycan is linked to N352.

Belongs to the CLN5 family. As to quaternary structure, multimer. Interacts with SORT1, RAB5A and RAB7A. Interacts with PPT1, TPP1, CLN3, CLN6, CLN8, ATP5F1A and ATP5F1B. Post-translationally, N-glycosylated with both high mannose and complex type sugars. Glycosylation is important for proper folding and trafficking to the lysosomes. In terms of processing, the type II membrane signal anchor is proteolytically cleaved to produce a mature form that is transported to the lysosomes (Bis(monoacylglycero)phosphate synthase CLN5, secreted form). Can undergo proteolytic cleavage at the C-terminus, probably by a cysteine protease and may involve the removal of approximately 10-15 residues from the C-terminal end. As to expression, ubiquitous.

It is found in the lysosome. Its subcellular location is the membrane. It catalyses the reaction S-hexadecanoyl-L-cysteinyl-[protein] + H2O = L-cysteinyl-[protein] + hexadecanoate + H(+). The enzyme catalyses 2 1-acyl-sn-glycero-3-phospho-(1'-sn-glycerol) = 1-acyl-sn-glycero-3-phospho-(3'-acyl-sn-1'-glycerol) + sn-glycero-3-phospho-(1'-sn-glycerol). The catalysed reaction is 2 1-(9Z-octadecenoyl)-sn-glycero-3-phospho-(1'-sn-glycerol) = 1-(9Z-octadecenoyl)-sn-glycero-3-phospho-(3'-(9Z-octadecenoyl)-1'-sn-glycerol) + sn-glycero-3-phospho-(1'-sn-glycerol). It carries out the reaction 2 1-octadecanoyl-sn-glycero-3-phospho-(1'-sn-glycerol) = 1-octadecanoyl-sn-glycero-3-phospho-(3'-octadecanoyl-1'-sn-glycerol) + sn-glycero-3-phospho-(1'-sn-glycerol). It catalyses the reaction 2 1-hexadecanoyl-sn-glycero-3-phospho-(1'-sn-glycerol) = 1-hexadecanoyl-sn-glycero-3-phospho-(3'-hexadecanoyl-1'-sn-glycerol) + sn-glycero-3-phospho-(1'-sn-glycerol). The enzyme catalyses 2 1-tetradecanoyl-sn-glycero-3-phospho-(1'-sn-glycerol) = 1-tetradecanoyl-sn-glycero-3-phospho-(3'-tetradecanoyl-1'-sn-glycerol) + sn-glycero-3-phospho-(1'-sn-glycerol). Its activity is regulated as follows. Anionic phospholipids activate bis(monoacylglycero)phosphate (BMP) synthase activity. Amiodarone, a cationic amphiphilic drug inhibits BMP synthase activity towards liposomal lysophosphatidylglycerol. Palmostatin B inhibits palmitoyl protein thioesterase activity. Catalyzes the synthesis of bis(monoacylglycero)phosphate (BMP) via transacylation of 2 molecules of lysophosphatidylglycerol (LPG). BMP also known as lysobisphosphatidic acid plays a key role in the formation of intraluminal vesicles and in maintaining intracellular cholesterol homeostasis. Can use only LPG as the exclusive lysophospholipid acyl donor for base exchange and displays BMP synthase activity towards various LPGs (LPG 14:0, LPG 16:0, LPG 18:0, LPG 18:1) with a higher preference for longer chain lengths. Plays a role in influencing the retrograde trafficking of lysosomal sorting receptors SORT1 and IGF2R from the endosomes to the trans-Golgi network by controlling the recruitment of retromer complex to the endosomal membrane. Regulates the localization and activation of RAB7A which is required to recruit the retromer complex to the endosomal membrane. In terms of biological role, exhibits palmitoyl protein thioesterase (S-depalmitoylation) activity in vitro and most likely plays a role in protein S-depalmitoylation. The sequence is that of Bis(monoacylglycero)phosphate synthase CLN5 (CLN5) from Homo sapiens (Human).